Consider the following 80-residue polypeptide: Exodeoxyribonuclease 7 small subunit (80 aa).

The protein belongs to the XseB family. Heterooligomer composed of large and small subunits.

It is found in the cytoplasm. The enzyme catalyses Exonucleolytic cleavage in either 5'- to 3'- or 3'- to 5'-direction to yield nucleoside 5'-phosphates.. Its function is as follows. Bidirectionally degrades single-stranded DNA into large acid-insoluble oligonucleotides, which are then degraded further into small acid-soluble oligonucleotides. This Shigella sonnei (strain Ss046) protein is Exodeoxyribonuclease 7 small subunit.